The following is a 487-amino-acid chain: 3-octaprenyl-4-hydroxybenzoate carboxy-lyase (487 aa).

A Mn(2+)-binding site is contributed by N172. Residues 175-177, 189-191, and 194-195 each bind prenylated FMN; these read IYR, RWL, and RG. E238 is a binding site for Mn(2+). D287 acts as the Proton donor in catalysis.

Belongs to the UbiD family. As to quaternary structure, homohexamer. The cofactor is prenylated FMN. Mn(2+) serves as cofactor.

The protein localises to the cell membrane. It carries out the reaction a 4-hydroxy-3-(all-trans-polyprenyl)benzoate + H(+) = a 2-(all-trans-polyprenyl)phenol + CO2. It participates in cofactor biosynthesis; ubiquinone biosynthesis. In terms of biological role, catalyzes the decarboxylation of 3-octaprenyl-4-hydroxy benzoate to 2-octaprenylphenol, an intermediate step in ubiquinone biosynthesis. This Nitrosococcus oceani (strain ATCC 19707 / BCRC 17464 / JCM 30415 / NCIMB 11848 / C-107) protein is 3-octaprenyl-4-hydroxybenzoate carboxy-lyase.